Consider the following 45-residue polypeptide: uncharacterized protein (45 aa).

Residues 10–27 (LLYFVLFVDIYGIFTNNI) form a helical membrane-spanning segment.

It is found in the membrane. This is an uncharacterized protein from Dictyostelium discoideum (Social amoeba).